A 333-amino-acid polypeptide reads, in one-letter code: Transcription factor MYB94 (333 aa).

2 consecutive HTH myb-type domains span residues 9-65 and 66-116; these read KIGV…RPGI and KRGN…KKKL. DNA-binding regions (H-T-H motif) lie at residues 37-61 and 89-112; these read WRSV…TNYL and WAAI…NTHL. Residues 134–154 show a composition bias toward polar residues; sequence KDFSISNKNTTSHQSSNSSKG. Disordered regions lie at residues 134-157 and 183-218; these read KDFS…GQWE and PTNF…YPSG. Positions 196-209 are enriched in low complexity; sequence SSSSSSTTTTTTTT.

Expressed in germinating seeds, rosette and cauline leaves, flower buds, open flowers, stems and developing siliques.

It localises to the nucleus. Functionally, transcription activator involved in the activation of cuticular wax biosynthesis under drought stress. Binds directly to the promoters of genes involved in cuticular wax biosynthesis. Transactivates WSD1, KCS2/DAISY, CER1, CER2, FAR3 and ECR genes. Functions together with MYB96 in the activation of cuticular wax biosynthesis. This is Transcription factor MYB94 from Arabidopsis thaliana (Mouse-ear cress).